The following is a 316-amino-acid chain: Acetaldehyde dehydrogenase (316 aa).

Position 12–15 (12–15 (SGNI)) interacts with NAD(+). Cysteine 132 functions as the Acyl-thioester intermediate in the catalytic mechanism. NAD(+) contacts are provided by residues 163 to 171 (SAGPGTRAN) and asparagine 289.

It belongs to the acetaldehyde dehydrogenase family.

The enzyme catalyses acetaldehyde + NAD(+) + CoA = acetyl-CoA + NADH + H(+). In Bordetella avium (strain 197N), this protein is Acetaldehyde dehydrogenase (bphG).